The primary structure comprises 318 residues: Ankyrin repeat and SOCS box protein 7 (318 aa).

ANK repeat units lie at residues 13–42 (QEELQIQAAVAAGDVHTVRKMLEQGYSPNG), 46–75 (NGWTLLHFSAARGKERCVRVFLEHGADPTV), 80–109 (GGFTALHYAAMHGRARIARLMLESEYRSDI), 116–145 (DGWTPLHVAAHYGRDSFVRLLLEFKAEVDP), 149–178 (KGTTPLQLAIIRERSSCVKILLDHNANIDI), 180–208 (NGFLLRYAVIKSNHSYCRMFLQRGADTNL), and 213–242 (DGQTPLHLSALRDDVLCARMLYNYGADTNT). The 54-residue stretch at 265–318 (LDFLQEVTRQPRNLQDLCRIKIRQCIGLQNLKLLDELPIAKVMKDYLKHKFDDI) folds into the SOCS box domain.

This sequence belongs to the ankyrin SOCS box (ASB) family. In terms of assembly, interacts with CUL5. Interacts with RNF7. Interacts with PSRC1.

It functions in the pathway protein modification; protein ubiquitination. Probable substrate-recognition component of a SCF-like ECS (Elongin-Cullin-SOCS-box protein) E3 ubiquitin-protein ligase complex which mediates the ubiquitination and subsequent proteasomal degradation of target proteins. Plays a role in spindle dynamics and genome integrity by targeting the mitotic progression protein PSRC1 for proteasomal degradation in a cell cycle-dependent manner. Also participates in meiosis by mediating the proper attachment between kinetochores and microtubules. This chain is Ankyrin repeat and SOCS box protein 7 (ASB7), found in Homo sapiens (Human).